Consider the following 122-residue polypeptide: Large ribosomal subunit protein uL14 (122 aa).

This sequence belongs to the universal ribosomal protein uL14 family. As to quaternary structure, part of the 50S ribosomal subunit. Forms a cluster with proteins L3 and L19. In the 70S ribosome, L14 and L19 interact and together make contacts with the 16S rRNA in bridges B5 and B8.

Its function is as follows. Binds to 23S rRNA. Forms part of two intersubunit bridges in the 70S ribosome. The chain is Large ribosomal subunit protein uL14 from Bordetella avium (strain 197N).